We begin with the raw amino-acid sequence, 509 residues long: ATP synthase subunit beta (509 aa).

The disordered stretch occupies residues 1-28; that stretch reads MAKAATPKETAAAKKPAAPKKAASAKTA. 187 to 194 contributes to the ATP binding site; it reads GGAGVGKT.

The protein belongs to the ATPase alpha/beta chains family. As to quaternary structure, F-type ATPases have 2 components, CF(1) - the catalytic core - and CF(0) - the membrane proton channel. CF(1) has five subunits: alpha(3), beta(3), gamma(1), delta(1), epsilon(1). CF(0) has three main subunits: a(1), b(2) and c(9-12). The alpha and beta chains form an alternating ring which encloses part of the gamma chain. CF(1) is attached to CF(0) by a central stalk formed by the gamma and epsilon chains, while a peripheral stalk is formed by the delta and b chains.

It localises to the cell inner membrane. The enzyme catalyses ATP + H2O + 4 H(+)(in) = ADP + phosphate + 5 H(+)(out). In terms of biological role, produces ATP from ADP in the presence of a proton gradient across the membrane. The catalytic sites are hosted primarily by the beta subunits. This chain is ATP synthase subunit beta, found in Sinorhizobium medicae (strain WSM419) (Ensifer medicae).